The chain runs to 105 residues: U2-lycotoxin-Ls1d (105 aa).

An N-terminal signal peptide occupies residues 1–17 (MIKYVLISALLVVAVYS). Positions 18 to 41 (FTIEDNEDALLEEAEDELDTEEER) are excised as a propeptide. 4 disulfides stabilise this stretch: Cys51–Cys67, Cys58–Cys97, Cys60–Cys83, and Cys69–Cys81.

Belongs to the neurotoxin 04 (omega-agtx) family. 01 (type I omega-agtx) subfamily. In terms of tissue distribution, expressed by the venom gland.

Its subcellular location is the secreted. Functionally, insecticidal to house crickets. It induces an excitatory slow-onset impact that leads to irreversible spastic paralysis. It also modifies human voltage-gated potassium channel Kv1.5/KCNA5. Most likely, it binds to the voltage-sensing domain of the channel, suggesting it does not block the pore but prevents its opening at physiological membrane potentials. The recombinant peptide binds to the channel in an irreversible manner and slows down the hKv1.5 current activation kinetics. It is not toxic to mice, when intracranially injected (at 0.5 ug/g mouse). The sequence is that of U2-lycotoxin-Ls1d from Lycosa singoriensis (Wolf spider).